The chain runs to 182 residues: Phospholipase A2 inhibitor gamma subunit A (182 aa).

Disulfide bonds link Cys-3-Cys-27, Cys-6-Cys-13, Cys-20-Cys-48, Cys-54-Cys-75, Cys-76-Cys-81, Cys-99-Cys-124, Cys-117-Cys-146, and Cys-150-Cys-172. A glycan (N-linked (GlcNAc...) asparagine) is linked at Asn-157.

It belongs to the CNF-like-inhibitor family. In terms of assembly, heterotrimer of 2 subunits A and 1 subunit B. Post-translationally, N-glycosylation is not important for activity, since deglycosylation does not change its PLA2 inhibitory activity. As to expression, expressed by the liver.

It localises to the secreted. Its function is as follows. Strongly inhibits its own venom PLA2 and all other PLA2s tested including Elapid, Crotalid and Viperid venom PLA2s, as well as honeybee PLA2s. In Laticauda semifasciata (Black-banded sea krait), this protein is Phospholipase A2 inhibitor gamma subunit A.